A 538-amino-acid polypeptide reads, in one-letter code: Phosphoenolpyruvate carboxykinase (ATP) (538 aa).

Substrate-binding residues include Arg64, Tyr205, and Lys211. Residues Lys211, His230, and 246 to 254 (GLSGTGKTT) contribute to the ATP site. The Mn(2+) site is built by Lys211 and His230. A Mn(2+)-binding site is contributed by Asp267. ATP is bound by residues Glu295, Arg331, 447–448 (RI), and Thr453. Substrate is bound at residue Arg331.

This sequence belongs to the phosphoenolpyruvate carboxykinase (ATP) family. Monomer. The cofactor is Mn(2+).

It is found in the cytoplasm. It carries out the reaction oxaloacetate + ATP = phosphoenolpyruvate + ADP + CO2. It functions in the pathway carbohydrate biosynthesis; gluconeogenesis. Involved in the gluconeogenesis. Catalyzes the conversion of oxaloacetate (OAA) to phosphoenolpyruvate (PEP) through direct phosphoryl transfer between the nucleoside triphosphate and OAA. The protein is Phosphoenolpyruvate carboxykinase (ATP) of Haemophilus influenzae (strain 86-028NP).